We begin with the raw amino-acid sequence, 539 residues long: RING finger protein 37 (539 aa).

The disordered stretch occupies residues 226 to 249; it reads PALPMESDCDPGGQSESQHSPCTL. Over residues 239–249 the composition is skewed to polar residues; it reads QSESQHSPCTL. A U-box domain is found at 258 to 338; it reads DVPEEFLDPI…DRFLLQHSIS (81 aa). Disordered stretches follow at residues 359 to 399 and 456 to 479; these read LPSR…EPTA and GTRGSSACRRPASSSEHPRSVSGP. The span at 374–395 shows a compositional bias: low complexity; the sequence is HYSLGMSASSSATSPLFSPTTS. Residues 481 to 526 form an RING-type zinc finger; the sequence is CASCKQAFSSYSTNEPVYQLPCGHLLCRPCLSEKQRSQPMMCTACR.

In terms of assembly, interacts with UBE2L3. Interacts with VCP. As to expression, expressed in testis and placenta.

Its subcellular location is the nucleus. The enzyme catalyses S-ubiquitinyl-[E2 ubiquitin-conjugating enzyme]-L-cysteine + [acceptor protein]-L-lysine = [E2 ubiquitin-conjugating enzyme]-L-cysteine + N(6)-ubiquitinyl-[acceptor protein]-L-lysine.. It participates in protein modification; protein ubiquitination. Functionally, may have a ubiquitin-protein ligase activity acting as an E3 ubiquitin-protein ligase or as a ubiquitin-ubiquitin ligase promoting elongation of ubiquitin chains on substrates. This Mus musculus (Mouse) protein is RING finger protein 37 (Ubox5).